Consider the following 58-residue polypeptide: UPF0391 membrane protein Patl_4137 (58 aa).

The next 2 helical transmembrane spans lie at 4-24 (WALTFLIIAILAGVMGFGGIA) and 27-47 (AAGIAKIIFFVFLVLLVLSLV).

It belongs to the UPF0391 family.

It localises to the cell membrane. This Pseudoalteromonas atlantica (strain T6c / ATCC BAA-1087) protein is UPF0391 membrane protein Patl_4137.